The sequence spans 184 residues: Trichothecene 15-O-acetyltransferase SAT16 (184 aa).

His154 is a binding site for substrate.

Belongs to the trichothecene O-acetyltransferase family.

Its pathway is mycotoxin biosynthesis. Trichothecene 15-O-acetyltransferase; part of the satratoxin SC2 cluster involved in the biosynthesis of satratoxins, trichothecene mycotoxins that are associated with human food poisonings. Satratoxins are suggested to be made by products of multiple gene clusters (SC1, SC2 and SC3) that encode 21 proteins in all, including polyketide synthases, acetyltransferases, and other enzymes expected to modify the trichothecene skeleton. SC1 encodes 10 proteins, SAT1 to SAT10. The largest are SAT8, which encodes a putative polyketide synthase (PKS) with a conventional non-reducing architecture, and SAT10, a putative protein containing four ankyrin repeats and thus may be involved in protein scaffolding. The putative short-chain reductase SAT3 may assist the PKS in some capacity. SAT6 contains a secretory lipase domain and acts probably as a trichothecene esterase. SAT5 encodes a putative acetyltransferase, and so, with SAT6, may affect endogenous protection from toxicity. The probable transcription factor SAT9 may regulate the expression of the SC1 cluster. SC2 encodes proteins SAT11 to SAT16, the largest of which encodes the putative reducing PKS SAT13. SAT11 is a cytochrome P450 monooxygenase, while SAT14 and SAT16 are probable acetyltransferases. The SC2 cluster may be regulated by the transcription factor SAT15. SC3 is a small cluster that encodes 5 proteins, SAT17 to SAT21. SAT21 is a putative MFS-type transporter which may have a role in exporting secondary metabolites. The four other proteins putatively encoded in SC3 include the taurine hydroxylase-like protein SAT17, the O-methyltransferase SAT18, the acetyltransferase SAT19, and the Cys6-type zinc finger SAT20, the latter being probably involved in regulation of SC3 expression. The polypeptide is Trichothecene 15-O-acetyltransferase SAT16 (Stachybotrys chartarum (strain CBS 109288 / IBT 7711) (Toxic black mold)).